The following is a 354-amino-acid chain: NADH-quinone oxidoreductase subunit H (354 aa).

The next 8 membrane-spanning stretches (helical) occupy residues 23-43 (LVRA…LILW), 91-111 (YIIA…VVPF), 124-144 (LLYV…AGWA), 162-182 (ISYE…TGSL), 203-223 (ILSW…ISGV), 250-270 (GMAF…ISAM), 291-311 (IPGF…FIWL), and 330-350 (IFIP…VSPW).

Belongs to the complex I subunit 1 family. NDH-1 is composed of 14 different subunits. Subunits NuoA, H, J, K, L, M, N constitute the membrane sector of the complex.

It is found in the cell inner membrane. It catalyses the reaction a quinone + NADH + 5 H(+)(in) = a quinol + NAD(+) + 4 H(+)(out). NDH-1 shuttles electrons from NADH, via FMN and iron-sulfur (Fe-S) centers, to quinones in the respiratory chain. The immediate electron acceptor for the enzyme in this species is believed to be ubiquinone. Couples the redox reaction to proton translocation (for every two electrons transferred, four hydrogen ions are translocated across the cytoplasmic membrane), and thus conserves the redox energy in a proton gradient. This subunit may bind ubiquinone. In Ralstonia nicotianae (strain ATCC BAA-1114 / GMI1000) (Ralstonia solanacearum), this protein is NADH-quinone oxidoreductase subunit H.